The sequence spans 605 residues: MNLRTSSTLLSLLILTVPIMASNFYPYTKKSYPIYVKTMVSYAFLVSLIPTMIFIQSGQETMISNWHWMTIQTLKLSLSFKLDYFSMILMPVALSVTWSIMEFSMWYMHSDPYINRFFKYLLLFLITMMLLVTANNLFQLFIGWEGVGIMSFLLIGWWYGRTDANTAALQAILYNRIGDVGFLVAMAWFLFNLNTWELQQIFTLNPTNTNLPLTGLLLAATGKSAQFGLHPWLPSAMEGPTPVSALLHSSTMVVAGIFLLIRFYPLTESNKTIQTMMLCLGAITTLFTAICALTQNDIKKIVAFSTSSQLGLMMVTVGINQPHLAFLHICTHAFFKAMLFLCSGSIIHSLNDEQDIRKMGGLYKSLPFTTTALITGSLALTGMPFLTGFYSKDLIIESINTSYTNAWALFITLIATSLTAVYSTRIIYFALLGQPRFPTLILINEDIPLLINPIKRLLVGSIFAGFFISNNITPTTIPQMTMPTYLKTTAMLVTLLGFIVALELNTATQNLKLTPPSNYLKFSNLLGYFPTIMHRLQPLTSLLTSQKVASMLLDLAWLENALPKSISIFQMKTSTLISSQKGQIKLYFLSFLITLTLSLIMLNFT.

15 helical membrane passes run threonine 8–threonine 28, isoleucine 34–phenylalanine 54, methionine 87–tyrosine 107, phenylalanine 117–leucine 137, leucine 140–glycine 160, alanine 171–phenylalanine 191, threonine 241–isoleucine 261, isoleucine 273–leucine 293, isoleucine 301–glutamine 321, leucine 324–glycine 344, leucine 366–leucine 386, leucine 409–phenylalanine 429, leucine 457–isoleucine 477, methionine 482–leucine 502, and isoleucine 584–phenylalanine 604.

This sequence belongs to the complex I subunit 5 family. Core subunit of respiratory chain NADH dehydrogenase (Complex I) which is composed of 45 different subunits.

The protein resides in the mitochondrion inner membrane. The catalysed reaction is a ubiquinone + NADH + 5 H(+)(in) = a ubiquinol + NAD(+) + 4 H(+)(out). In terms of biological role, core subunit of the mitochondrial membrane respiratory chain NADH dehydrogenase (Complex I) which catalyzes electron transfer from NADH through the respiratory chain, using ubiquinone as an electron acceptor. Essential for the catalytic activity and assembly of complex I. This chain is NADH-ubiquinone oxidoreductase chain 5 (MT-ND5), found in Rousettus amplexicaudatus (Common rousette).